A 330-amino-acid polypeptide reads, in one-letter code: Aspartate--ammonia ligase (330 aa).

It belongs to the class-II aminoacyl-tRNA synthetase family. AsnA subfamily.

It is found in the cytoplasm. The enzyme catalyses L-aspartate + NH4(+) + ATP = L-asparagine + AMP + diphosphate + H(+). The protein operates within amino-acid biosynthesis; L-asparagine biosynthesis; L-asparagine from L-aspartate (ammonia route): step 1/1. This is Aspartate--ammonia ligase from Escherichia coli O127:H6 (strain E2348/69 / EPEC).